The following is a 119-amino-acid chain: Beta-2-microglobulin (119 aa).

A signal peptide spans 1–20 (MARFVVVPLFVLLSLFGLEA). The 90-residue stretch at 25 to 114 (PKIQVYSRYP…VTFSTPKTVK (90 aa)) folds into the Ig-like C1-type domain. The cysteines at positions 45 and 100 are disulfide-linked.

Belongs to the beta-2-microglobulin family. Heterodimer of an alpha chain and a beta chain. Beta-2-microglobulin is the beta-chain of major histocompatibility complex class I molecules.

The protein localises to the secreted. Functionally, component of the class I major histocompatibility complex (MHC). Involved in the presentation of peptide antigens to the immune system. The polypeptide is Beta-2-microglobulin (B2M) (Saguinus niger (Black tamarin)).